Reading from the N-terminus, the 1187-residue chain is Serine/threonine-protein kinase SIK3 homolog (1187 aa).

The segment covering 1-15 has biased composition (low complexity); sequence MAAVSSGAAAAAGIP. Residues 1 to 41 form a disordered region; it reads MAAVSSGAAAAAGIPNPNPNRERPQQQQQQQPASAALHPVA. The Protein kinase domain maps to 59-310; that stretch reads YEMERTIGKG…MEQICKNKWM (252 aa). ATP-binding positions include 65-73 and K88; that span reads IGKGNFAVV. Catalysis depends on D181, which acts as the Proton acceptor. Phosphothreonine is present on T214. Phosphoserine is present on S218. The 41-residue stretch at 337-377 folds into the UBA domain; sequence LINEQVLMAMAEMGFDRERTLQSLHADSYDHYSATYSLLSD. 3 disordered regions span residues 548-587, 697-776, and 1060-1092; these read LKRPRGQSPLVTSPHPIPAVAPVDEEGSDAEPDPEAVQRS, IQPS…PPGS, and CADAADAGMESDHNGYGSRSTQSDSYRPRGALQ. Over residues 570 to 581 the composition is skewed to acidic residues; it reads VDEEGSDAEPDP. Residues 739–749 show a composition bias toward polar residues; sequence VQYQHGSALYQ.

It belongs to the protein kinase superfamily. CAMK Ser/Thr protein kinase family. SNF1 subfamily. Mg(2+) is required as a cofactor.

The enzyme catalyses L-seryl-[protein] + ATP = O-phospho-L-seryl-[protein] + ADP + H(+). It catalyses the reaction L-threonyl-[protein] + ATP = O-phospho-L-threonyl-[protein] + ADP + H(+). The chain is Serine/threonine-protein kinase SIK3 homolog from Danio rerio (Zebrafish).